The chain runs to 208 residues: Ribonuclease HII (208 aa).

Residues 17-208 (LRVCGIDEAG…SFRLRQLGEK (192 aa)) enclose the RNase H type-2 domain. Positions 23, 24, and 120 each coordinate a divalent metal cation.

Belongs to the RNase HII family. Requires Mn(2+) as cofactor. Mg(2+) serves as cofactor.

It is found in the cytoplasm. The enzyme catalyses Endonucleolytic cleavage to 5'-phosphomonoester.. In terms of biological role, endonuclease that specifically degrades the RNA of RNA-DNA hybrids. In Chlorobium luteolum (strain DSM 273 / BCRC 81028 / 2530) (Pelodictyon luteolum), this protein is Ribonuclease HII.